The following is a 68-amino-acid chain: Conotoxin reg3.14 (68 aa).

The signal sequence occupies residues 1 to 22 (MMSKLGVLLTICLLLFPLSVLP). Residues 23 to 52 (LDGDQPADQPAERMQDISAEQNPWFDPVKR) constitute a propeptide that is removed on maturation. 3 disulfide bridges follow: Cys53-Cys68, Cys54-Cys64, and Cys59-Cys67.

It belongs to the conotoxin M superfamily. As to expression, expressed by the venom duct.

It localises to the secreted. The protein is Conotoxin reg3.14 of Conus regius (Crown cone).